Consider the following 426-residue polypeptide: Histidine--tRNA ligase (426 aa).

The protein belongs to the class-II aminoacyl-tRNA synthetase family. In terms of assembly, homodimer.

It is found in the cytoplasm. The catalysed reaction is tRNA(His) + L-histidine + ATP = L-histidyl-tRNA(His) + AMP + diphosphate + H(+). This is Histidine--tRNA ligase from Pseudoalteromonas translucida (strain TAC 125).